The primary structure comprises 382 residues: uncharacterized protein (382 aa).

An N-terminal signal peptide occupies residues 1–25 (MKKWMAAVFVMMLMLCFGGIENVKA). Catalysis depends on S186, which acts as the Nucleophile. Catalysis depends on residues D354 and H357.

The protein belongs to the 'GDSL' lipolytic enzyme family.

This is an uncharacterized protein from Bacillus subtilis (strain 168).